Here is a 111-residue protein sequence, read N- to C-terminus: Nucleoid-associated protein Cpha266_1171 (111 aa).

It belongs to the YbaB/EbfC family. Homodimer.

Its subcellular location is the cytoplasm. It localises to the nucleoid. Binds to DNA and alters its conformation. May be involved in regulation of gene expression, nucleoid organization and DNA protection. This chain is Nucleoid-associated protein Cpha266_1171, found in Chlorobium phaeobacteroides (strain DSM 266 / SMG 266 / 2430).